The following is a 91-amino-acid chain: Small ribosomal subunit protein bS20 (91 aa).

Residues 1 to 28 form a disordered region; that stretch reads MPNIKSAIKRTKTIEKRRAHRASQKSDL. Basic residues predominate over residues 7–23; sequence AIKRTKTIEKRRAHRAS.

This sequence belongs to the bacterial ribosomal protein bS20 family.

In terms of biological role, binds directly to 16S ribosomal RNA. In Brevibacillus brevis (strain 47 / JCM 6285 / NBRC 100599), this protein is Small ribosomal subunit protein bS20.